The chain runs to 539 residues: Chaperonin GroEL (539 aa).

ATP contacts are provided by residues 29 to 32 (TLGP), 86 to 90 (DGTTT), glycine 413, 476 to 478 (NAA), and aspartate 492.

This sequence belongs to the chaperonin (HSP60) family. As to quaternary structure, forms a cylinder of 14 subunits composed of two heptameric rings stacked back-to-back. Interacts with the co-chaperonin GroES.

Its subcellular location is the cytoplasm. It catalyses the reaction ATP + H2O + a folded polypeptide = ADP + phosphate + an unfolded polypeptide.. Its function is as follows. Together with its co-chaperonin GroES, plays an essential role in assisting protein folding. The GroEL-GroES system forms a nano-cage that allows encapsulation of the non-native substrate proteins and provides a physical environment optimized to promote and accelerate protein folding. This Parageobacillus thermoglucosidasius (Geobacillus thermoglucosidasius) protein is Chaperonin GroEL.